Consider the following 472-residue polypeptide: 3-isopropylmalate dehydratase large subunit (472 aa).

[4Fe-4S] cluster contacts are provided by Cys-347, Cys-407, and Cys-410.

This sequence belongs to the aconitase/IPM isomerase family. LeuC type 1 subfamily. Heterodimer of LeuC and LeuD. Requires [4Fe-4S] cluster as cofactor.

It catalyses the reaction (2R,3S)-3-isopropylmalate = (2S)-2-isopropylmalate. It functions in the pathway amino-acid biosynthesis; L-leucine biosynthesis; L-leucine from 3-methyl-2-oxobutanoate: step 2/4. Catalyzes the isomerization between 2-isopropylmalate and 3-isopropylmalate, via the formation of 2-isopropylmaleate. The chain is 3-isopropylmalate dehydratase large subunit from Bacillus subtilis (strain 168).